A 159-amino-acid chain; its full sequence is ATP synthase subunit b (159 aa).

Residues 4 to 24 (VGINGTLIVQLVTFVILVALL) form a helical membrane-spanning segment.

The protein belongs to the ATPase B chain family. As to quaternary structure, F-type ATPases have 2 components, F(1) - the catalytic core - and F(0) - the membrane proton channel. F(1) has five subunits: alpha(3), beta(3), gamma(1), delta(1), epsilon(1). F(0) has three main subunits: a(1), b(2) and c(10-14). The alpha and beta chains form an alternating ring which encloses part of the gamma chain. F(1) is attached to F(0) by a central stalk formed by the gamma and epsilon chains, while a peripheral stalk is formed by the delta and b chains.

It localises to the cell inner membrane. F(1)F(0) ATP synthase produces ATP from ADP in the presence of a proton or sodium gradient. F-type ATPases consist of two structural domains, F(1) containing the extramembraneous catalytic core and F(0) containing the membrane proton channel, linked together by a central stalk and a peripheral stalk. During catalysis, ATP synthesis in the catalytic domain of F(1) is coupled via a rotary mechanism of the central stalk subunits to proton translocation. Functionally, component of the F(0) channel, it forms part of the peripheral stalk, linking F(1) to F(0). This Acidithiobacillus ferridurans protein is ATP synthase subunit b.